Consider the following 200-residue polypeptide: Cysteine dioxygenase type 1 (200 aa).

Fe cation is bound by residues H86, H88, and H140. A cross-link (3'-(S-cysteinyl)-tyrosine (Cys-Tyr)) is located at residues 93–157 (CFLKLLQGNL…TEPAVSLHLY (65 aa)).

It belongs to the cysteine dioxygenase family. Monomer. Fe(2+) is required as a cofactor. Requires Ni(2+) as cofactor. Zn(2+) serves as cofactor. Post-translationally, the thioether cross-link between Cys-93 and Tyr-157 plays a structural role through stabilizing the Fe(2+) ion, and prevents the production of highly damaging free hydroxyl radicals by holding the oxygen radical via hydroxyl hydrogen. In terms of tissue distribution, highest expression in liver. Also expressed in kidney, lung, brain and small intestine.

It catalyses the reaction L-cysteine + O2 = 3-sulfino-L-alanine + H(+). The protein operates within organosulfur biosynthesis; taurine biosynthesis; hypotaurine from L-cysteine: step 1/2. Catalyzes the oxidation of cysteine to cysteine sulfinic acid with addition of molecular dioxygen. This is Cysteine dioxygenase type 1 (Cdo1) from Mus musculus (Mouse).